Reading from the N-terminus, the 585-residue chain is Protein FAM151A (585 aa).

The helical transmembrane segment at 14 to 34 threads the bilayer; it reads WVFASITCVSAVAIAAIVLAI.

The protein belongs to the menorin family.

The protein localises to the membrane. This is Protein FAM151A (FAM151A) from Pongo abelii (Sumatran orangutan).